The chain runs to 1221 residues: DNA-directed RNA polymerase subunit beta' (1221 aa).

The Zn(2+) site is built by cysteine 60, cysteine 62, cysteine 75, and cysteine 78. Residues aspartate 449, aspartate 451, and aspartate 453 each contribute to the Mg(2+) site. Residues cysteine 821, cysteine 896, cysteine 903, and cysteine 906 each coordinate Zn(2+).

Belongs to the RNA polymerase beta' chain family. The RNAP catalytic core consists of 2 alpha, 1 beta, 1 beta' and 1 omega subunit. When a sigma factor is associated with the core the holoenzyme is formed, which can initiate transcription. Mg(2+) is required as a cofactor. Requires Zn(2+) as cofactor.

It carries out the reaction RNA(n) + a ribonucleoside 5'-triphosphate = RNA(n+1) + diphosphate. DNA-dependent RNA polymerase catalyzes the transcription of DNA into RNA using the four ribonucleoside triphosphates as substrates. This is DNA-directed RNA polymerase subunit beta' from Lactobacillus delbrueckii subsp. bulgaricus (strain ATCC BAA-365 / Lb-18).